A 273-amino-acid polypeptide reads, in one-letter code: Phosphate import ATP-binding protein PstB (273 aa).

In terms of domain architecture, ABC transporter spans 18–257; that stretch reads ISLQNVTISY…EFDKTKKIFN (240 aa). 50–57 serves as a coordination point for ATP; the sequence is GPSGCGKS.

Belongs to the ABC transporter superfamily. Phosphate importer (TC 3.A.1.7) family. As to quaternary structure, the complex is composed of two ATP-binding proteins (PstB), two transmembrane proteins (PstC and PstA) and a solute-binding protein (PstS).

Its subcellular location is the cell inner membrane. The catalysed reaction is phosphate(out) + ATP + H2O = ADP + 2 phosphate(in) + H(+). In terms of biological role, part of the ABC transporter complex PstSACB involved in phosphate import. Responsible for energy coupling to the transport system. This is Phosphate import ATP-binding protein PstB from Prochlorococcus marinus (strain SARG / CCMP1375 / SS120).